Here is a 445-residue protein sequence, read N- to C-terminus: Proton extrusion protein PxcA (445 aa).

Transmembrane regions (helical) follow at residues 227 to 247 (FILLLIIVPLLTQQLTKTFLI), 322 to 342 (AIANIFADICSLIAFGFVVAF), 369 to 389 (LIILFTDIFVGFHSPHGWEVI), and 405 to 425 (FNFLFIATFPVILDTVLKYWI).

The protein belongs to the CemA family.

The protein resides in the cell inner membrane. Its function is as follows. Required for H(+) efflux immediately after light irradiation to form a rapid H(+) concentration gradient across the thylakoid membranes. Together with PxcL, contributes to transient H(+) uptake following dark to light transition. This is Proton extrusion protein PxcA from Microcystis aeruginosa (strain NIES-843 / IAM M-2473).